The chain runs to 128 residues: Fluoride-specific ion channel FluC (128 aa).

Transmembrane regions (helical) follow at residues 3-23, 34-54, 65-85, and 102-122; these read FTTI…RSFT, LSFP…IGFL, INLK…FSTF, and FLNI…GFWI. Residues glycine 77 and threonine 80 each contribute to the Na(+) site.

This sequence belongs to the fluoride channel Fluc/FEX (TC 1.A.43) family.

The protein localises to the cell inner membrane. It carries out the reaction fluoride(in) = fluoride(out). Na(+) is not transported, but it plays an essential structural role and its presence is essential for fluoride channel function. Fluoride-specific ion channel. Important for reducing fluoride concentration in the cell, thus reducing its toxicity. The polypeptide is Fluoride-specific ion channel FluC (Campylobacter fetus subsp. fetus (strain 82-40)).